Here is a 431-residue protein sequence, read N- to C-terminus: Chaperone SurA (431 aa).

The first 22 residues, 1–22 (MNLKKLLTSAVLSISLCQSAFA), serve as a signal peptide directing secretion. 2 consecutive PpiC domains span residues 173–274 (AEEY…KVQD) and 283–383 (TTET…QLLD).

The protein localises to the periplasm. It catalyses the reaction [protein]-peptidylproline (omega=180) = [protein]-peptidylproline (omega=0). In terms of biological role, chaperone involved in the correct folding and assembly of outer membrane proteins. Recognizes specific patterns of aromatic residues and the orientation of their side chains, which are found more frequently in integral outer membrane proteins. May act in both early periplasmic and late outer membrane-associated steps of protein maturation. In Pseudoalteromonas translucida (strain TAC 125), this protein is Chaperone SurA.